A 141-amino-acid polypeptide reads, in one-letter code: Hemoglobin subunit alpha-A (141 aa).

The region spanning 1 to 141 (VLSGPDKTNV…VGAVLTAKYR (141 aa)) is the Globin domain. Position 58 (His-58) interacts with O2. Residue His-87 participates in heme b binding.

Belongs to the globin family. In terms of assembly, heterotetramer of two alpha chains and two beta chains. Red blood cells.

Involved in oxygen transport from the lung to the various peripheral tissues. This chain is Hemoglobin subunit alpha-A (HBAA), found in Rhea americana (Greater rhea).